The following is a 369-amino-acid chain: UDP-N-acetylglucosamine--N-acetylmuramyl-(pentapeptide) pyrophosphoryl-undecaprenol N-acetylglucosamine transferase (369 aa).

UDP-N-acetyl-alpha-D-glucosamine contacts are provided by residues 16-18 (TGG), Asn-130, Arg-171, Ser-196, and Gln-297.

It belongs to the glycosyltransferase 28 family. MurG subfamily.

Its subcellular location is the cell inner membrane. The enzyme catalyses di-trans,octa-cis-undecaprenyl diphospho-N-acetyl-alpha-D-muramoyl-L-alanyl-D-glutamyl-meso-2,6-diaminopimeloyl-D-alanyl-D-alanine + UDP-N-acetyl-alpha-D-glucosamine = di-trans,octa-cis-undecaprenyl diphospho-[N-acetyl-alpha-D-glucosaminyl-(1-&gt;4)]-N-acetyl-alpha-D-muramoyl-L-alanyl-D-glutamyl-meso-2,6-diaminopimeloyl-D-alanyl-D-alanine + UDP + H(+). It participates in cell wall biogenesis; peptidoglycan biosynthesis. In terms of biological role, cell wall formation. Catalyzes the transfer of a GlcNAc subunit on undecaprenyl-pyrophosphoryl-MurNAc-pentapeptide (lipid intermediate I) to form undecaprenyl-pyrophosphoryl-MurNAc-(pentapeptide)GlcNAc (lipid intermediate II). The protein is UDP-N-acetylglucosamine--N-acetylmuramyl-(pentapeptide) pyrophosphoryl-undecaprenol N-acetylglucosamine transferase of Desulfotalea psychrophila (strain LSv54 / DSM 12343).